The sequence spans 424 residues: MSILIKNGYVVYGENLEVIKADVLIESNKIVEVAKNINKSADTVIDAKGKVVSPGFVNLHTHSPMGLFRGLADDLPLMDWLQDHIWPKEAKLTREYTKVGAYLGALEMIKSGTTTFLDMYFFMDAVAEVTLESGLRGYLSYGMIDLGDPEKTEKEVNEALRIMKFIEGLDSDRVHFVFGPHAPYTCSIALLKEVRRLANEHGKLITIHVSETMAEIGQISERYGKSPVVLLDDIGFFGRDVIIAHGVWLDSRDIQILARHGVTVAHNPASNMKLASGVMPLQRLLNAGVNVGLGTDGSASNNNLDMLDEMKLAALLHKVHNLDPTVADAETVFRMATVNGARALGLKAGIIKEGYLADIAIIDFNKPHLRPINNVISHLVYSANGNDVETTIVDGKVLMLDRELFTLDEEKILNDAERVIGELT.

Zn(2+) is bound by residues His-60 and His-62. Substrate contacts are provided by Glu-89 and His-181. His-208 contacts Zn(2+). Residues Glu-211 and Asp-296 each contribute to the substrate site. Asp-296 is a Zn(2+) binding site.

It belongs to the metallo-dependent hydrolases superfamily. MTA/SAH deaminase family. Zn(2+) serves as cofactor.

The catalysed reaction is S-adenosyl-L-homocysteine + H2O + H(+) = S-inosyl-L-homocysteine + NH4(+). It catalyses the reaction S-methyl-5'-thioadenosine + H2O + H(+) = S-methyl-5'-thioinosine + NH4(+). Catalyzes the deamination of 5-methylthioadenosine and S-adenosyl-L-homocysteine into 5-methylthioinosine and S-inosyl-L-homocysteine, respectively. Is also able to deaminate adenosine. The chain is 5-methylthioadenosine/S-adenosylhomocysteine deaminase from Thermococcus onnurineus (strain NA1).